The primary structure comprises 171 residues: MAAAGSSSRFAVTCGLLSQYMRERQQPQPPVTVLEAVAEEEEEEDARTMQLFPPRAAAADGVATPSAGTAPLTIFYDGRMVVVDDVPVEKAAELMRLAGSACSPPQPAHAAALPEMPIARKASLQRFLQKRKHRITTTSEPYKKAAVASPAPEKSFAVAPVKDEPATWLGL.

Residues 65-100 (PSAGTAPLTIFYDGRMVVVDDVPVEKAAELMRLAGS) form the Tify domain. A Jas motif is present at residues 117-142 (PIARKASLQRFLQKRKHRITTTSEPY). The short motif at 119-126 (ARKASLQR) is the Nuclear localization signal element.

This sequence belongs to the TIFY/JAZ family. Interacts with BHLH148 and COI1A. Interacts with COI1A, COI1B and COI2 in a coronatine-dependent manner. Coronatine is an analog of jasmonoyl isoleucine (JA-Ile). In terms of processing, ubiquitinated. Increase in jasmonoyl isoleucine (JA-Ile) levels mediates its degradation via COI1A-mediated proteasome pathway.

It localises to the nucleus. Its function is as follows. Repressor of jasmonate (JA) responses. May act on an initial response of JA-regulated gene expression toward drought tolerance as part of a BHLH148-TIFY11D/JAZ12-COI1A complex. This Oryza sativa subsp. japonica (Rice) protein is Protein TIFY 11d.